Reading from the N-terminus, the 474-residue chain is Cysteine--tRNA ligase (474 aa).

Cysteine 30 serves as a coordination point for Zn(2+). The 'HIGH' region signature appears at 32–42 (PTVYNFAHIGN). 3 residues coordinate Zn(2+): cysteine 212, histidine 237, and glutamate 241. Residues 270-274 (KMSKS) carry the 'KMSKS' region motif. Lysine 273 contributes to the ATP binding site.

Belongs to the class-I aminoacyl-tRNA synthetase family. As to quaternary structure, monomer. Zn(2+) serves as cofactor.

The protein localises to the cytoplasm. It carries out the reaction tRNA(Cys) + L-cysteine + ATP = L-cysteinyl-tRNA(Cys) + AMP + diphosphate. In Leptospira borgpetersenii serovar Hardjo-bovis (strain JB197), this protein is Cysteine--tRNA ligase.